Reading from the N-terminus, the 545-residue chain is Purple acid phosphatase 13 (545 aa).

The signal sequence occupies residues 1–25 (MVVKYTMSMSFFVIFASTVTIIVHG). Residues Asn125 and Asn145 are each glycosylated (N-linked (GlcNAc...) asparagine). Residue Asp203 participates in Fe cation binding. A glycan (N-linked (GlcNAc...) asparagine) is linked at Asn209. Residue Tyr233 coordinates Fe cation. N-linked (GlcNAc...) asparagine glycosylation is found at Asn240, Asn254, Asn306, Asn321, Asn351, and Asn367. The active-site Proton donor is His389. His416 provides a ligand contact to Zn(2+). Residue 416–418 (HVD) coordinates substrate. N-linked (GlcNAc...) asparagine glycans are attached at residues Asn428, Asn466, Asn475, and Asn510.

The protein belongs to the metallophosphoesterase superfamily. Purple acid phosphatase family. Homodimer. Requires Fe cation as cofactor. The cofactor is Zn(2+). As to expression, expressed in stems, leaves, flowers and siliques.

It is found in the secreted. It catalyses the reaction a phosphate monoester + H2O = an alcohol + phosphate. This is Purple acid phosphatase 13 (PAP13) from Arabidopsis thaliana (Mouse-ear cress).